The following is an 806-amino-acid chain: DNA topoisomerase 4 subunit A (806 aa).

Residues 33–499 (LPDARDGLKP…EEIKINLEVM (467 aa)) form the Topo IIA-type catalytic domain. The active-site O-(5'-phospho-DNA)-tyrosine intermediate is Tyr-121.

The protein belongs to the type II topoisomerase GyrA/ParC subunit family. ParC type 2 subfamily. Heterotetramer composed of ParC and ParE.

The protein resides in the cell membrane. It is found in the cytoplasm. The enzyme catalyses ATP-dependent breakage, passage and rejoining of double-stranded DNA.. In terms of biological role, topoisomerase IV is essential for chromosome segregation. It relaxes supercoiled DNA. Performs the decatenation events required during the replication of a circular DNA molecule. In Bacillus subtilis (strain 168), this protein is DNA topoisomerase 4 subunit A.